The primary structure comprises 45 residues: Myotoxin-2 (45 aa).

3 cysteine pairs are disulfide-bonded: Cys4/Cys36, Cys11/Cys30, and Cys18/Cys37.

It belongs to the crotamine-myotoxin family. Monomer. As to expression, expressed by the venom gland.

It is found in the secreted. Its function is as follows. Cationic peptide that possesses multiple functions. It acts as a cell-penetrating peptide (CPP), and as a potent voltage-gated potassium channel (Kv) inhibitor. It exhibits antimicrobial activities, hind limb paralysis, and severe muscle necrosis by a non-enzymatic mechanism. The chain is Myotoxin-2 from Crotalus viridis viridis (Prairie rattlesnake).